Consider the following 241-residue polypeptide: 1-(5-phosphoribosyl)-5-[(5-phosphoribosylamino)methylideneamino] imidazole-4-carboxamide isomerase (241 aa).

The active-site Proton acceptor is Asp-8. Asp-129 functions as the Proton donor in the catalytic mechanism.

The protein belongs to the HisA/HisF family.

It is found in the cytoplasm. The catalysed reaction is 1-(5-phospho-beta-D-ribosyl)-5-[(5-phospho-beta-D-ribosylamino)methylideneamino]imidazole-4-carboxamide = 5-[(5-phospho-1-deoxy-D-ribulos-1-ylimino)methylamino]-1-(5-phospho-beta-D-ribosyl)imidazole-4-carboxamide. Its pathway is amino-acid biosynthesis; L-histidine biosynthesis; L-histidine from 5-phospho-alpha-D-ribose 1-diphosphate: step 4/9. This chain is 1-(5-phosphoribosyl)-5-[(5-phosphoribosylamino)methylideneamino] imidazole-4-carboxamide isomerase, found in Rhodospirillum rubrum (strain ATCC 11170 / ATH 1.1.1 / DSM 467 / LMG 4362 / NCIMB 8255 / S1).